A 309-amino-acid polypeptide reads, in one-letter code: Ferrochelatase (309 aa).

Histidine 185 and glutamate 262 together coordinate Fe cation.

The protein belongs to the ferrochelatase family.

It is found in the cytoplasm. The enzyme catalyses heme b + 2 H(+) = protoporphyrin IX + Fe(2+). It functions in the pathway porphyrin-containing compound metabolism; protoheme biosynthesis; protoheme from protoporphyrin-IX: step 1/1. Functionally, catalyzes the ferrous insertion into protoporphyrin IX. This Campylobacter jejuni subsp. jejuni serotype O:6 (strain 81116 / NCTC 11828) protein is Ferrochelatase.